A 378-amino-acid polypeptide reads, in one-letter code: tRNA-specific 2-thiouridylase MnmA (378 aa).

ATP-binding positions include 9-16 (GVSGGVDS) and methionine 35. The tract at residues 94 to 96 (NPD) is interaction with target base in tRNA. Cysteine 99 acts as the Nucleophile in catalysis. A disulfide bridge links cysteine 99 with cysteine 195. Glycine 123 contacts ATP. Residues 145 to 147 (KDQ) form an interaction with tRNA region. Cysteine 195 functions as the Cysteine persulfide intermediate in the catalytic mechanism. The interaction with tRNA stretch occupies residues 307 to 308 (RY).

Belongs to the MnmA/TRMU family.

The protein localises to the cytoplasm. It carries out the reaction S-sulfanyl-L-cysteinyl-[protein] + uridine(34) in tRNA + AH2 + ATP = 2-thiouridine(34) in tRNA + L-cysteinyl-[protein] + A + AMP + diphosphate + H(+). Its function is as follows. Catalyzes the 2-thiolation of uridine at the wobble position (U34) of tRNA, leading to the formation of s(2)U34. The chain is tRNA-specific 2-thiouridylase MnmA from Xanthomonas axonopodis pv. citri (strain 306).